Reading from the N-terminus, the 367-residue chain is 2-aminoethylphosphonate--pyruvate transaminase (367 aa).

Lys194 carries the N6-(pyridoxal phosphate)lysine modification.

This sequence belongs to the class-V pyridoxal-phosphate-dependent aminotransferase family. PhnW subfamily. Homodimer. Requires pyridoxal 5'-phosphate as cofactor.

It carries out the reaction (2-aminoethyl)phosphonate + pyruvate = phosphonoacetaldehyde + L-alanine. Its function is as follows. Involved in phosphonate degradation. The sequence is that of 2-aminoethylphosphonate--pyruvate transaminase from Salmonella paratyphi A (strain ATCC 9150 / SARB42).